The sequence spans 623 residues: Chaperone protein DnaK (623 aa).

At Thr-197 the chain carries Phosphothreonine; by autocatalysis. Residues 595–615 (AENMYKKDEPNTANDKKKKDD) show a composition bias toward basic and acidic residues. A disordered region spans residues 595–623 (AENMYKKDEPNTANDKKKKDDDVIDAEVE).

Belongs to the heat shock protein 70 family.

Functionally, acts as a chaperone. The protein is Chaperone protein DnaK of Campylobacter jejuni subsp. jejuni serotype O:6 (strain 81116 / NCTC 11828).